The primary structure comprises 930 residues: Zn(2)-C6 fungal-type transcription factor FTF1c (930 aa).

The segment at residues 137–164 (CIACRRKKIRCSGEKPACEHCLCSYIPC) is a DNA-binding region (zn(2)-C6 fungal-type).

Its subcellular location is the nucleus. Functionally, zn(2)-C6 fungal-type transcription factor that has a role in the establishment of the fungus within the plant and/or the progress of the disease. Regulates the expression of virulence factors such as SIX1 and SIX6. This chain is Zn(2)-C6 fungal-type transcription factor FTF1c, found in Fusarium oxysporum f. sp. lycopersici (strain 4287 / CBS 123668 / FGSC 9935 / NRRL 34936) (Fusarium vascular wilt of tomato).